We begin with the raw amino-acid sequence, 340 residues long: MSEKNAYAKSGVDVEAGYEVVERIKKHVARTERAGVMGALGGFGGMFDLSKTGVREPVLVSGTDGVGTKLMLAIKYDKHDTIGQDCVAMCVNDIIAAGAEPLYFLDYVATGKNNPVKFEEVVSGVAEGCVQAGAALIGGETAEMPGMYGEDDYDLAGFAVGVAEKSQLIDGSKVKEGDILLGLASSGIHSNGYSLVRRVFADYTGKELLPELEGKQLKDVLLEPTRIYVRAALPLIKEELINGIGHITGGGFIENVPRMFADDLAAEIDEDKVPVLPIFKALEKYGDIKHEEMFEIFNMGVGLMLAVSPENVNRVKELLDEPVYEIGRIIKKADDSVVIK.

The protein belongs to the AIR synthase family.

The protein localises to the cytoplasm. The enzyme catalyses 2-formamido-N(1)-(5-O-phospho-beta-D-ribosyl)acetamidine + ATP = 5-amino-1-(5-phospho-beta-D-ribosyl)imidazole + ADP + phosphate + H(+). It functions in the pathway purine metabolism; IMP biosynthesis via de novo pathway; 5-amino-1-(5-phospho-D-ribosyl)imidazole from N(2)-formyl-N(1)-(5-phospho-D-ribosyl)glycinamide: step 2/2. This chain is Phosphoribosylformylglycinamidine cyclo-ligase, found in Streptococcus pyogenes serotype M28 (strain MGAS6180).